The following is a 1007-amino-acid chain: Exportin-7 (1007 aa).

Belongs to the exportin family.

The protein localises to the nucleus. Its subcellular location is the cytoplasm. The protein resides in the nuclear pore complex. Its function is as follows. Mediates the nuclear export of proteins (cargos) with broad substrate specificity. The protein is Exportin-7 (xpo7) of Dictyostelium discoideum (Social amoeba).